Here is a 616-residue protein sequence, read N- to C-terminus: Dihydroxy-acid dehydratase (616 aa).

D81 contributes to the Mg(2+) binding site. C122 lines the [2Fe-2S] cluster pocket. 2 residues coordinate Mg(2+): D123 and K124. The residue at position 124 (K124) is an N6-carboxylysine. A [2Fe-2S] cluster-binding site is contributed by C195. E491 serves as a coordination point for Mg(2+). S517 serves as the catalytic Proton acceptor.

This sequence belongs to the IlvD/Edd family. In terms of assembly, homodimer. It depends on [2Fe-2S] cluster as a cofactor. The cofactor is Mg(2+).

It carries out the reaction (2R)-2,3-dihydroxy-3-methylbutanoate = 3-methyl-2-oxobutanoate + H2O. It catalyses the reaction (2R,3R)-2,3-dihydroxy-3-methylpentanoate = (S)-3-methyl-2-oxopentanoate + H2O. The protein operates within amino-acid biosynthesis; L-isoleucine biosynthesis; L-isoleucine from 2-oxobutanoate: step 3/4. Its pathway is amino-acid biosynthesis; L-valine biosynthesis; L-valine from pyruvate: step 3/4. Its function is as follows. Functions in the biosynthesis of branched-chain amino acids. Catalyzes the dehydration of (2R,3R)-2,3-dihydroxy-3-methylpentanoate (2,3-dihydroxy-3-methylvalerate) into 2-oxo-3-methylpentanoate (2-oxo-3-methylvalerate) and of (2R)-2,3-dihydroxy-3-methylbutanoate (2,3-dihydroxyisovalerate) into 2-oxo-3-methylbutanoate (2-oxoisovalerate), the penultimate precursor to L-isoleucine and L-valine, respectively. The sequence is that of Dihydroxy-acid dehydratase from Salmonella paratyphi C (strain RKS4594).